The chain runs to 583 residues: SHC-transforming protein 1 (583 aa).

Position 1 is an N-acetylmethionine (methionine 1). The segment at 1 to 92 (MDLLPPKPKY…EPGRAADDGE (92 aa)) is disordered. The span at 16–44 (ESLSSLEEGASGSTPPEELPSPSASSLGP) shows a compositional bias: low complexity. Residues serine 36 and serine 139 each carry the phosphoserine modification. Lysine 154 is modified (N6-acetyllysine). In terms of domain architecture, PID spans 156 to 339 (MGPGVSYLVR…AGFDGSAWDE (184 aa)). The tract at residues 340–487 (EEEEPPDHQY…SMAEQLRGEP (148 aa)) is CH1. A phosphotyrosine mark is found at tyrosine 349 and tyrosine 350. A compositionally biased stretch (low complexity) spans 372–384 (AAPGAARPTAPNA). The disordered stretch occupies residues 372–415 (AAPGAARPTAPNAQTPSHLGATLPVGQPVGGDPEVRKQMPPPPP). A Phosphotyrosine modification is found at tyrosine 427. Serine 453 bears the Phosphoserine mark. One can recognise an SH2 domain in the interval 488-579 (WFHGKLSRRE…GSELCLQQPV (92 aa)).

Interacts with CPNE3; this interaction may mediate the binding of CPNE3 with ERBB2. Interacts with the NPXY motif of tyrosine-phosphorylated IGF1R and INSR in vitro via the PID domain. Once activated, binds to GRB2. Interacts with tyrosine-phosphorylated CD3T and DDR2. Interacts with the N-terminal region of SH2B2. Interacts with phosphorylated LRP1 and IRS4. Interacts with INPP5D/SHIP1 and INPPL1/SHIP2. Interacts with TRIM31. Interacts with PTPN6/SHP (tyrosine phosphorylated). Identified in a complex containing FGFR4, NCAM1, CDH2, PLCG1, FRS2, SRC, SHC1, GAP43 and CTT. Interacts with ALK, GAB2, GRB7 and KIT. Interacts with FLT4 (tyrosine-phosphorylated). Interacts with EPHB1 and GRB2; activates the MAPK/ERK cascade to regulate cell migration. Interacts with PDGFRB (tyrosine-phosphorylated). Interacts with ERBB4. Interacts with TEK/TIE2 (tyrosine-phosphorylated). Interacts with the Trk receptors NTRK1, NTRK2 and NTRK3; in a phosphotyrosine-dependent manner. Interacts with PTK2/FAK1. Interacts with CEACAM1; this interaction is CEACAM1-phosphorylation-dependent and mediates interaction with EGFR or INSR resulting in decrease coupling of SHC1 to the MAPK3/ERK1-MAPK1/ERK2 pathway. Interacts (via PID domain) with PEAK1 (when phosphorylated at 'Tyr-1188'). Found in a complex with PPP1CA, PPP1CC, SHC1 and PEAK1. As to quaternary structure, (Microbial infection) Interacts with herpes simplex virus 1 UL46. Phosphorylated by activated epidermal growth factor receptor. Phosphorylated in response to FLT4 and KIT signaling. Isoform p46Shc and isoform p52Shc are phosphorylated on tyrosine residues of the Pro-rich domain. Isoform p66Shc is phosphorylated on Ser-36 by PRKCB upon treatment with insulin, hydrogen peroxide or irradiation with ultraviolet light. Tyrosine phosphorylated in response to FLT3 signaling. Tyrosine phosphorylated by activated PTK2B/PYK2. Tyrosine phosphorylated by ligand-activated ALK. Tyrosine phosphorylated by ligand-activated PDGFRB. Tyrosine phosphorylated by TEK/TIE2. May be tyrosine phosphorylated by activated PTK2/FAK1; tyrosine phosphorylation was seen in an astrocytoma biopsy, where PTK2/FAK1 kinase activity is high, but not in normal brain tissue. Isoform p52Shc dephosphorylation by PTPN2 may regulate interaction with GRB2. As to expression, widely expressed. Expressed in neural stem cells but absent in mature neurons.

It is found in the cytoplasm. Its subcellular location is the cell junction. The protein resides in the focal adhesion. It localises to the mitochondrion matrix. The protein localises to the mitochondrion. In terms of biological role, signaling adapter that couples activated growth factor receptors to signaling pathways. Participates in a signaling cascade initiated by activated KIT and KITLG/SCF. Isoform p46Shc and isoform p52Shc, once phosphorylated, couple activated receptor tyrosine kinases to Ras via the recruitment of the GRB2/SOS complex and are implicated in the cytoplasmic propagation of mitogenic signals. Isoform p46Shc and isoform p52Shc may thus function as initiators of the Ras signaling cascade in various non-neuronal systems. Isoform p66Shc does not mediate Ras activation, but is involved in signal transduction pathways that regulate the cellular response to oxidative stress and life span. Isoform p66Shc acts as a downstream target of the tumor suppressor p53 and is indispensable for the ability of stress-activated p53 to induce elevation of intracellular oxidants, cytochrome c release and apoptosis. The expression of isoform p66Shc has been correlated with life span. Participates in signaling downstream of the angiopoietin receptor TEK/TIE2, and plays a role in the regulation of endothelial cell migration and sprouting angiogenesis. The protein is SHC-transforming protein 1 (SHC1) of Homo sapiens (Human).